The following is a 261-amino-acid chain: uncharacterized protein (261 aa).

The 127-residue stretch at 135 to 261 folds into the N-acetyltransferase domain; sequence LVLKRIDEDI…VTEYTIYYSG (127 aa).

This sequence belongs to the acetyltransferase family.

This is an uncharacterized protein from Bacillus subtilis (strain 168).